The chain runs to 292 residues: Ribosomal protein L11 methyltransferase (292 aa).

S-adenosyl-L-methionine contacts are provided by T143, G164, D186, and N228.

Belongs to the methyltransferase superfamily. PrmA family.

The protein resides in the cytoplasm. The enzyme catalyses L-lysyl-[protein] + 3 S-adenosyl-L-methionine = N(6),N(6),N(6)-trimethyl-L-lysyl-[protein] + 3 S-adenosyl-L-homocysteine + 3 H(+). In terms of biological role, methylates ribosomal protein L11. In Aeromonas hydrophila subsp. hydrophila (strain ATCC 7966 / DSM 30187 / BCRC 13018 / CCUG 14551 / JCM 1027 / KCTC 2358 / NCIMB 9240 / NCTC 8049), this protein is Ribosomal protein L11 methyltransferase.